The sequence spans 530 residues: Chaperone Ric-8A (530 aa).

Phosphoserine; by CK2 is present on Ser-435. Thr-440 is modified (phosphothreonine; by CK2). Position 442 is a phosphothreonine (Thr-442). 4 positions are modified to phosphoserine: Ser-501, Ser-522, Ser-523, and Ser-527.

This sequence belongs to the synembryn family. As to quaternary structure, interacts with GDP-bound G alpha proteins GNAI1, GNAO1 and GNAQ, and with GNA13 with lower affinity. Does not interact with G-alpha proteins when they are in complex with subunits beta and gamma. Interacts (via C-terminus) with RGS14; the interaction stimulates the dissociation of the complex between RGS14 and the active GTP-bound form of GNAI1. Interacts with NCS1; interaction is favored in the absence of Ca(2+) and myristoylation of NCS1 is not required. In terms of processing, phosphorylated at Ser-435 and Thr-440 by CK2, stabilizing its interface with G alpha proteins.

Its subcellular location is the cytoplasm. The protein localises to the cell cortex. Its function is as follows. Chaperone that specifically binds and folds nascent G alpha proteins prior to G protein heterotrimer formation, promoting their stability and activity: folds GNAI1, GNAO1, GNA13 and GNAQ. Does not fold G(s) G-alpha proteins GNAS nor GNAL. Also acts as a guanine nucleotide exchange factor (GEF) for G alpha proteins by stimulating exchange of bound GDP for free GTP. Involved in regulation of microtubule pulling forces during mitotic movement of chromosomes by stimulating G(i)-alpha protein (GNAI1), possibly leading to release G(i)-alpha-GTP and NuMA proteins from the NuMA-GPSM2-G(i)-alpha-GDP complex. Also acts as an activator for G(q)-alpha (GNAQ) protein by enhancing the G(q)-coupled receptor-mediated ERK activation. The protein is Chaperone Ric-8A of Rattus norvegicus (Rat).